A 195-amino-acid polypeptide reads, in one-letter code: Protein SYM1 (195 aa).

The next 4 helical transmembrane spans lie at 21–39 (GIMTGSLFGIGDVIAQVGF), 55–71 (AVVYGSLIFSIIGDSWY), 98–115 (LLFAPVGIPMYYGVMSIL), and 159–175 (LFSVNIISIFWNAFLSF).

This sequence belongs to the peroxisomal membrane protein PXMP2/4 family.

It is found in the mitochondrion inner membrane. May be involved in cellular response to stress. Required to maintain mitochondrial DNA (mtDNA) integrity and stability. This chain is Protein SYM1 (SYM1), found in Kluyveromyces lactis (strain ATCC 8585 / CBS 2359 / DSM 70799 / NBRC 1267 / NRRL Y-1140 / WM37) (Yeast).